The chain runs to 126 residues: Adrenocorticotropic hormone receptor (126 aa).

Residues 1 to 25 (VLPEEIFFTISIVGVLENLIVLLAV) traverse the membrane as a helical segment. The Cytoplasmic segment spans residues 26-34 (FKNKNLQAP). The helical transmembrane segment at 35-55 (MYFFICSLAISDMLGSLYKIL) threads the bilayer. Residues 56 to 80 (ENILIILRNMGYLKPRGSFETTADD) lie on the Extracellular side of the membrane. The chain crosses the membrane as a helical span at residues 81-102 (IIDSLFVLSLLGAIFSLSVIAA). At 103 to 123 (DRYITIFHALRYHSIVTMRRT) the chain is on the cytoplasmic side. The chain crosses the membrane as a helical span at residues 124–126 (VVV).

It belongs to the G-protein coupled receptor 1 family. As to quaternary structure, interacts with MRAP; increasing ligand-sensitivity and generation of cAMP. Interacts with MRAP2; competing with MRAP for binding to MC2R and impairing the binding of corticotropin (ACTH).

The protein resides in the cell membrane. Functionally, receptor for corticotropin (ACTH). This receptor is mediated by G proteins (G(s)) which activate adenylate cyclase (cAMP). This Papio hamadryas (Hamadryas baboon) protein is Adrenocorticotropic hormone receptor (MC2R).